The following is a 415-amino-acid chain: Gamma-glutamyl phosphate reductase (415 aa).

The protein belongs to the gamma-glutamyl phosphate reductase family.

The protein localises to the cytoplasm. The enzyme catalyses L-glutamate 5-semialdehyde + phosphate + NADP(+) = L-glutamyl 5-phosphate + NADPH + H(+). The protein operates within amino-acid biosynthesis; L-proline biosynthesis; L-glutamate 5-semialdehyde from L-glutamate: step 2/2. Functionally, catalyzes the NADPH-dependent reduction of L-glutamate 5-phosphate into L-glutamate 5-semialdehyde and phosphate. The product spontaneously undergoes cyclization to form 1-pyrroline-5-carboxylate. The protein is Gamma-glutamyl phosphate reductase of Dictyoglomus turgidum (strain DSM 6724 / Z-1310).